Here is a 21-residue protein sequence, read N- to C-terminus: Protein YliM (21 aa).

This chain is Protein YliM, found in Escherichia coli (strain K12).